The following is a 274-amino-acid chain: tRNA-cytidine(32) 2-sulfurtransferase (274 aa).

The PP-loop motif signature appears at 40-45 (SGGKDS). The [4Fe-4S] cluster site is built by C115, C118, and C206.

Belongs to the TtcA family. In terms of assembly, homodimer. Mg(2+) serves as cofactor. It depends on [4Fe-4S] cluster as a cofactor.

The protein resides in the cytoplasm. The enzyme catalyses cytidine(32) in tRNA + S-sulfanyl-L-cysteinyl-[cysteine desulfurase] + AH2 + ATP = 2-thiocytidine(32) in tRNA + L-cysteinyl-[cysteine desulfurase] + A + AMP + diphosphate + H(+). It participates in tRNA modification. Its function is as follows. Catalyzes the ATP-dependent 2-thiolation of cytidine in position 32 of tRNA, to form 2-thiocytidine (s(2)C32). The sulfur atoms are provided by the cysteine/cysteine desulfurase (IscS) system. The protein is tRNA-cytidine(32) 2-sulfurtransferase of Pseudomonas putida (strain W619).